A 302-amino-acid chain; its full sequence is Aspartate carbamoyltransferase catalytic subunit (302 aa).

2 residues coordinate carbamoyl phosphate: Arg53 and Thr54. Position 82 (Lys82) interacts with L-aspartate. Arg103, His131, and Gln134 together coordinate carbamoyl phosphate. 2 residues coordinate L-aspartate: Arg164 and Arg223. Carbamoyl phosphate contacts are provided by Leu260 and Pro261.

Belongs to the aspartate/ornithine carbamoyltransferase superfamily. ATCase family. As to quaternary structure, heterooligomer of catalytic and regulatory chains.

It carries out the reaction carbamoyl phosphate + L-aspartate = N-carbamoyl-L-aspartate + phosphate + H(+). The protein operates within pyrimidine metabolism; UMP biosynthesis via de novo pathway; (S)-dihydroorotate from bicarbonate: step 2/3. Its function is as follows. Catalyzes the condensation of carbamoyl phosphate and aspartate to form carbamoyl aspartate and inorganic phosphate, the committed step in the de novo pyrimidine nucleotide biosynthesis pathway. This is Aspartate carbamoyltransferase catalytic subunit from Methanococcus maripaludis (strain C7 / ATCC BAA-1331).